The chain runs to 202 residues: Large ribosomal subunit protein eL13 (202 aa).

It belongs to the eukaryotic ribosomal protein eL13 family.

In Nicotiana tabacum (Common tobacco), this protein is Large ribosomal subunit protein eL13 (RPL13).